Here is a 452-residue protein sequence, read N- to C-terminus: Enolase (452 aa).

Residue Q167 coordinates (2R)-2-phosphoglycerate. E209 acts as the Proton donor in catalysis. Residues D250, E307, and D334 each coordinate Mg(2+). Positions 359, 388, 389, and 410 each coordinate (2R)-2-phosphoglycerate. Catalysis depends on K359, which acts as the Proton acceptor.

The protein belongs to the enolase family. It depends on Mg(2+) as a cofactor.

The protein resides in the cytoplasm. It is found in the secreted. Its subcellular location is the cell surface. The catalysed reaction is (2R)-2-phosphoglycerate = phosphoenolpyruvate + H2O. It functions in the pathway carbohydrate degradation; glycolysis; pyruvate from D-glyceraldehyde 3-phosphate: step 4/5. Functionally, catalyzes the reversible conversion of 2-phosphoglycerate (2-PG) into phosphoenolpyruvate (PEP). It is essential for the degradation of carbohydrates via glycolysis. This chain is Enolase, found in Mesomycoplasma hyopneumoniae (strain 7448) (Mycoplasma hyopneumoniae).